The following is a 200-amino-acid chain: NAD(P)H dehydrogenase (quinone) (200 aa).

The Flavodoxin-like domain maps to 4–190 (VLVLYYSTYG…DGARFQGRLV (187 aa)). FMN is bound by residues 10 to 15 (STYGHL) and 78 to 80 (TRF). Residue Y12 coordinates NAD(+). A substrate-binding site is contributed by W98. Residues 113-119 (STATQHG) and H134 contribute to the FMN site.

It belongs to the WrbA family. It depends on FMN as a cofactor.

It carries out the reaction a quinone + NADH + H(+) = a quinol + NAD(+). It catalyses the reaction a quinone + NADPH + H(+) = a quinol + NADP(+). In Acidovorax ebreus (strain TPSY) (Diaphorobacter sp. (strain TPSY)), this protein is NAD(P)H dehydrogenase (quinone).